The sequence spans 107 residues: Iron-sulfur cluster assembly protein CyaY (107 aa).

The protein belongs to the frataxin family.

Its function is as follows. Involved in iron-sulfur (Fe-S) cluster assembly. May act as a regulator of Fe-S biogenesis. The chain is Iron-sulfur cluster assembly protein CyaY from Edwardsiella ictaluri (strain 93-146).